We begin with the raw amino-acid sequence, 346 residues long: LRP2-binding protein (346 aa).

A TPR repeat occupies 58–91 (AMAYFLRGQLYFEEGWYEEALAQFEEIQEKDHQA). Sel1-like repeat units follow at residues 92 to 124 (IYQL…DSSC), 132 to 167 (FAAA…DNGN), 172 to 205 (VKAQ…GNGN), 206 to 241 (LESQ…ERGN), 242 to 276 (VYAQ…EVHD), and 296 to 331 (AMAS…RLNP).

In terms of assembly, interacts with LRP2.

The protein localises to the cytoplasm. In terms of biological role, may act as an adapter that regulates LRP2 function. This chain is LRP2-binding protein (Lrp2bp), found in Rattus norvegicus (Rat).